The primary structure comprises 620 residues: Translocator protein BipB (620 aa).

The tract at residues glutamine 58 to arginine 95 is disordered. A compositionally biased stretch (basic and acidic residues) spans histidine 66–alanine 84. A coiled-coil region spans residues glutamate 309 to methionine 339. Helical transmembrane passes span phenylalanine 355–leucine 375, alanine 401–cysteine 421, and leucine 430–valine 450.

The protein belongs to the SctE/SipB/YopB family.

It localises to the secreted. The protein localises to the host membrane. Its function is as follows. Plays a role in the bacterium-induced formation of multinucleated giant cell (MNGC), which is formed after host cell fusion, as well as in the intercellular spreading of bacteria and in the induction of apoptosis in macrophages. May act in concert with other effector proteins to induce fusion of host cell membranes. The protein is Translocator protein BipB (bipB) of Burkholderia pseudomallei (strain 1106a).